We begin with the raw amino-acid sequence, 401 residues long: Subtilisin-like protease 7 (401 aa).

An N-terminal signal peptide occupies residues 1–20 (MGFITKAIPLALAAASVING). A propeptide spanning residues 21–119 (AEILETRAGV…IERDARVQIN (99 aa)) is cleaved from the precursor. Residues 36 to 118 (KYIVVMNDGM…YIERDARVQI (83 aa)) enclose the Inhibitor I9 domain. N-linked (GlcNAc...) asparagine glycosylation occurs at Asn58. The Peptidase S8 domain maps to 129-401 (SWGLARVGSR…SKLINNGSGM (273 aa)). Catalysis depends on charge relay system residues Asp161 and His193. Asn223 and Asn253 each carry an N-linked (GlcNAc...) asparagine glycan. The active-site Charge relay system is the Ser347. Asn397 carries N-linked (GlcNAc...) asparagine glycosylation.

It belongs to the peptidase S8 family.

Its subcellular location is the secreted. Secreted subtilisin-like serine protease with keratinolytic activity that contributes to pathogenicity. The polypeptide is Subtilisin-like protease 7 (SUB7) (Trichophyton equinum (Horse ringworm fungus)).